A 380-amino-acid chain; its full sequence is MSQSKPTVNPPLWLLAELTYRCPLQCPYCSNPLDFARQDKELTTEQWIEVFRQARAMGSVQLGFSGGEPLTRKDLPELIRAARDLGFYTNLITSGIGLTESKLDAFSEAGLDHIQISFQASDEVLNAALAGNKKAFQQKLAMAKAVKARDYPMVLNFVLHRHNIDQLDKIIELCIELEADDVELATCQFYGWAFLNREGLLPTREQIARAEQVVADYRQKMAASGNLTNLLFVTPDYYEERPKGCMGGWGSIFLSVTPEGTALPCHSARQLPVAFPSVLEQSLESIWYDSFGFNRYRGYDWMPEPCRSCDEKEKDFGGCRCQAFMLTGSADNADPVCSKSPHHHKILEARREAACSDIKVSQLQFRNRTRSQLIYQTRDL.

The 216-residue stretch at Val-8–Ala-223 folds into the Radical SAM core domain. Cys-22, Cys-26, and Cys-29 together coordinate [4Fe-4S] cluster.

Belongs to the radical SAM superfamily. PqqE family. Interacts with PqqD. The interaction is necessary for activity of PqqE. [4Fe-4S] cluster serves as cofactor.

It carries out the reaction [PQQ precursor protein] + S-adenosyl-L-methionine = E-Y cross-linked-[PQQ precursor protein] + 5'-deoxyadenosine + L-methionine + H(+). It functions in the pathway cofactor biosynthesis; pyrroloquinoline quinone biosynthesis. Catalyzes the cross-linking of a glutamate residue and a tyrosine residue in the PqqA protein as part of the biosynthesis of pyrroloquinoline quinone (PQQ). This is PqqA peptide cyclase (pqqE) from Klebsiella pneumoniae.